The chain runs to 205 residues: MKIVAAEFVTSAVNPGGYPPGNLPEVAFVGRSNVGKSSLINKVVNRKGLAKTSSTPGRTQLINFFNINNDQFLMVDLPGYGYAKVPTDVRIKWGKMIEGYLKERECLKGVVLLIDSRHTPTAQDKQMYEWLQYYHVPTVVVATKVDKLSNNQWAKQQAVIKKSLPLSKEHQLISFSAETGRGKEKLLKVLDEFIHKDGINLTAIE.

Residues 22-196 (NLPEVAFVGR…LKVLDEFIHK (175 aa)) form the EngB-type G domain. GTP is bound by residues 30–37 (GRSNVGKS), 57–61 (GRTQL), 76–79 (DLPG), 143–146 (TKVD), and 175–177 (FSA). Ser37 and Thr59 together coordinate Mg(2+).

This sequence belongs to the TRAFAC class TrmE-Era-EngA-EngB-Septin-like GTPase superfamily. EngB GTPase family. Mg(2+) is required as a cofactor.

Functionally, necessary for normal cell division and for the maintenance of normal septation. The protein is Probable GTP-binding protein EngB of Desulforamulus reducens (strain ATCC BAA-1160 / DSM 100696 / MI-1) (Desulfotomaculum reducens).